The following is a 505-amino-acid chain: Protein phosphatase 1J (505 aa).

Residues 1–103 (MLNRVRSAVA…PPDTGRRLPW (103 aa)) are disordered. Residues 27–50 (DLPNAASAPPAAAPEAPRSPPAKA) show a composition bias toward low complexity. Phosphoserine occurs at positions 66 and 76. The region spanning 104-498 (STGYAEVINA…DDISVFVIPL (395 aa)) is the PPM-type phosphatase domain.

The protein belongs to the PP2C family. As to quaternary structure, interacts with UBE2I/UBC9.

The catalysed reaction is O-phospho-L-seryl-[protein] + H2O = L-seryl-[protein] + phosphate. It carries out the reaction O-phospho-L-threonyl-[protein] + H2O = L-threonyl-[protein] + phosphate. This Homo sapiens (Human) protein is Protein phosphatase 1J (PPM1J).